Consider the following 89-residue polypeptide: Defensin-like protein 108 (89 aa).

Positions 1–20 (MTSLIAFLFTVLVIVSSVHC) are cleaved as a signal peptide. Disulfide bonds link C39-C81, C49-C71, C57-C79, and C61-C80.

It belongs to the DEFL family.

It localises to the secreted. The sequence is that of Defensin-like protein 108 (LCR51) from Arabidopsis thaliana (Mouse-ear cress).